A 545-amino-acid polypeptide reads, in one-letter code: Chaperonin GroEL (545 aa).

ATP-binding positions include 29-32 (TLGP), Lys50, 86-90 (DGTTT), Gly413, and Asp495.

This sequence belongs to the chaperonin (HSP60) family. In terms of assembly, forms a cylinder of 14 subunits composed of two heptameric rings stacked back-to-back. Interacts with the co-chaperonin GroES.

The protein localises to the cytoplasm. It carries out the reaction ATP + H2O + a folded polypeptide = ADP + phosphate + an unfolded polypeptide.. Functionally, together with its co-chaperonin GroES, plays an essential role in assisting protein folding. The GroEL-GroES system forms a nano-cage that allows encapsulation of the non-native substrate proteins and provides a physical environment optimized to promote and accelerate protein folding. This is Chaperonin GroEL from Borreliella afzelii (strain PKo) (Borrelia afzelii).